The sequence spans 324 residues: Glyoxylate/hydroxypyruvate reductase B (324 aa).

Residues arginine 237 and glutamate 266 contribute to the active site. Histidine 285 (proton donor) is an active-site residue.

This sequence belongs to the D-isomer specific 2-hydroxyacid dehydrogenase family. GhrB subfamily. In terms of assembly, homodimer.

The protein resides in the cytoplasm. It catalyses the reaction glycolate + NADP(+) = glyoxylate + NADPH + H(+). It carries out the reaction (R)-glycerate + NAD(+) = 3-hydroxypyruvate + NADH + H(+). The catalysed reaction is (R)-glycerate + NADP(+) = 3-hydroxypyruvate + NADPH + H(+). In terms of biological role, catalyzes the NADPH-dependent reduction of glyoxylate and hydroxypyruvate into glycolate and glycerate, respectively. This Escherichia fergusonii (strain ATCC 35469 / DSM 13698 / CCUG 18766 / IAM 14443 / JCM 21226 / LMG 7866 / NBRC 102419 / NCTC 12128 / CDC 0568-73) protein is Glyoxylate/hydroxypyruvate reductase B.